The following is a 638-amino-acid chain: Threonine--tRNA ligase (638 aa).

The TGS domain occupies 1–61 (MPVITLPDGS…SVDGKLQIIT (61 aa)). The segment at 243–534 (DHRKIGKTQD…LTEEYAGFFP (292 aa)) is catalytic. The Zn(2+) site is built by cysteine 334, histidine 385, and histidine 511.

It belongs to the class-II aminoacyl-tRNA synthetase family. Homodimer. Requires Zn(2+) as cofactor.

It localises to the cytoplasm. The enzyme catalyses tRNA(Thr) + L-threonine + ATP = L-threonyl-tRNA(Thr) + AMP + diphosphate + H(+). In terms of biological role, catalyzes the attachment of threonine to tRNA(Thr) in a two-step reaction: L-threonine is first activated by ATP to form Thr-AMP and then transferred to the acceptor end of tRNA(Thr). Also edits incorrectly charged L-seryl-tRNA(Thr). This chain is Threonine--tRNA ligase, found in Hamiltonella defensa subsp. Acyrthosiphon pisum (strain 5AT).